The chain runs to 291 residues: Diaminopimelate epimerase (291 aa).

Substrate is bound by residues N13, Q46, and N66. Catalysis depends on C75, which acts as the Proton donor. Residues 76-77, N170, N203, and 221-222 each bind substrate; these read GN and ER. The Proton acceptor role is filled by C230. 231 to 232 lines the substrate pocket; that stretch reads GS.

The protein belongs to the diaminopimelate epimerase family. Homodimer.

It is found in the cytoplasm. The catalysed reaction is (2S,6S)-2,6-diaminopimelate = meso-2,6-diaminopimelate. The protein operates within amino-acid biosynthesis; L-lysine biosynthesis via DAP pathway; DL-2,6-diaminopimelate from LL-2,6-diaminopimelate: step 1/1. In terms of biological role, catalyzes the stereoinversion of LL-2,6-diaminopimelate (L,L-DAP) to meso-diaminopimelate (meso-DAP), a precursor of L-lysine and an essential component of the bacterial peptidoglycan. In Albidiferax ferrireducens (strain ATCC BAA-621 / DSM 15236 / T118) (Rhodoferax ferrireducens), this protein is Diaminopimelate epimerase.